We begin with the raw amino-acid sequence, 194 residues long: MRLTDIEIEQCLDNGTIIIDPRPGIEAISGVSVDVRLGSQFRVFKDHTAPYIDLSGPSAEMQIALDRIMSDKIEIADDQAFFLHPGELALAVTYESVTLPADIVGWLDGRSSLARLGLMVHVTAHRIDPGWQGKIVLEFFNSGKLPLALRPGMTIGALNFERLSSAVARPYNTRKSSKYKDQQEAVASRISQDK.

DCTP contacts are provided by residues 110–115 (RSSLAR), aspartate 128, 136–138 (VLE), tyrosine 171, lysine 178, and glutamine 182. Glutamate 138 serves as the catalytic Proton donor/acceptor. Residues 174–194 (RKSSKYKDQQEAVASRISQDK) are disordered.

Belongs to the dCTP deaminase family. Homotrimer.

It catalyses the reaction dCTP + H2O + H(+) = dUTP + NH4(+). The protein operates within pyrimidine metabolism; dUMP biosynthesis; dUMP from dCTP (dUTP route): step 1/2. Catalyzes the deamination of dCTP to dUTP. This Shewanella frigidimarina (strain NCIMB 400) protein is dCTP deaminase.